A 506-amino-acid chain; its full sequence is Maturase K (506 aa).

It belongs to the intron maturase 2 family. MatK subfamily.

It is found in the plastid. The protein resides in the chloroplast. Functionally, usually encoded in the trnK tRNA gene intron. Probably assists in splicing its own and other chloroplast group II introns. This Melilotus albus (White sweet clover) protein is Maturase K.